The chain runs to 182 residues: Prorelaxin (182 aa).

Residues 1 to 24 form the signal peptide; that stretch reads MPRLFSYLLGVWLLLSQLPREIPG. Gln25 carries the pyrrolidone carboxylic acid modification. 3 cysteine pairs are disulfide-bonded: Cys34–Cys169, Cys46–Cys182, and Cys168–Cys173. Positions 57–154 are cleaved as a propeptide — connecting peptide; the sequence is SLEEPQLETG…LKNLGLDKHS (98 aa). Positions 159 to 160 are excised as a propeptide; the sequence is LF.

This sequence belongs to the insulin family. As to quaternary structure, heterodimer of a B chain and an A chain linked by two disulfide bonds.

The protein resides in the secreted. Its function is as follows. Relaxin is an ovarian hormone that acts with estrogen to produce dilatation of the birth canal in many mammals. This chain is Prorelaxin (RLN), found in Sus scrofa (Pig).